Reading from the N-terminus, the 216-residue chain is MSSLVTPQHAEELSTGARQLGVELSAQQHELLLGYLALLIKWNKAYNLTAVRDPDEMVSRHLLDSLSVMPFIHNDTQRWLDVGSGGGMPGIPLAILHPHKQVTVLDSNGKKTRFLTQVKMELKLDNLTVIHSRVEEVQPEQPFCGIISRAFSSMENFTNWTRHLGDSRTQWLAMKGLHPADELVALPADFTVESEQALTVPGCQGQRHLLILRRKA.

S-adenosyl-L-methionine-binding positions include G83, M88, 134 to 135 (VE), and R149.

This sequence belongs to the methyltransferase superfamily. RNA methyltransferase RsmG family.

The protein localises to the cytoplasm. It carries out the reaction guanosine(527) in 16S rRNA + S-adenosyl-L-methionine = N(7)-methylguanosine(527) in 16S rRNA + S-adenosyl-L-homocysteine. Functionally, specifically methylates the N7 position of guanine in position 527 of 16S rRNA. This Pseudomonas entomophila (strain L48) protein is Ribosomal RNA small subunit methyltransferase G.